The primary structure comprises 488 residues: Probable malate:quinone oxidoreductase (488 aa).

It belongs to the MQO family. FAD is required as a cofactor.

It carries out the reaction (S)-malate + a quinone = a quinol + oxaloacetate. It participates in carbohydrate metabolism; tricarboxylic acid cycle; oxaloacetate from (S)-malate (quinone route): step 1/1. This chain is Probable malate:quinone oxidoreductase, found in Neisseria meningitidis serogroup C / serotype 2a (strain ATCC 700532 / DSM 15464 / FAM18).